A 324-amino-acid chain; its full sequence is D-alanine--D-alanine ligase (324 aa).

Residues 121-321 (NQYLKAFGVR…IKDVMTDIIE (201 aa)) form the ATP-grasp domain. 149–204 (VEKIGLPCFIKPNLGGSSFGVTKVKTREQIQPAIAKAFSEAEEVMIEAFMGGTELT) contributes to the ATP binding site. The Mg(2+) site is built by D275, E288, and N290.

Belongs to the D-alanine--D-alanine ligase family. Mg(2+) is required as a cofactor. The cofactor is Mn(2+).

Its subcellular location is the cytoplasm. The enzyme catalyses 2 D-alanine + ATP = D-alanyl-D-alanine + ADP + phosphate + H(+). Its pathway is cell wall biogenesis; peptidoglycan biosynthesis. Cell wall formation. The protein is D-alanine--D-alanine ligase of Bacteroides fragilis (strain YCH46).